The following is a 294-amino-acid chain: Indole-3-glycerol phosphate synthase (294 aa).

Belongs to the TrpC family.

The catalysed reaction is 1-(2-carboxyphenylamino)-1-deoxy-D-ribulose 5-phosphate + H(+) = (1S,2R)-1-C-(indol-3-yl)glycerol 3-phosphate + CO2 + H2O. It participates in amino-acid biosynthesis; L-tryptophan biosynthesis; L-tryptophan from chorismate: step 4/5. The chain is Indole-3-glycerol phosphate synthase from Parasynechococcus marenigrum (strain WH8102).